A 378-amino-acid chain; its full sequence is Glutamate 5-kinase (378 aa).

Lysine 19 lines the ATP pocket. Substrate is bound by residues serine 59, aspartate 146, and asparagine 158. An ATP-binding site is contributed by 178–179; the sequence is TD. Residues 285–363 form the PUA domain; it reads RGSVTVDPGA…SEFEKLLGYT (79 aa).

Belongs to the glutamate 5-kinase family.

It localises to the cytoplasm. It carries out the reaction L-glutamate + ATP = L-glutamyl 5-phosphate + ADP. Its pathway is amino-acid biosynthesis; L-proline biosynthesis; L-glutamate 5-semialdehyde from L-glutamate: step 1/2. Its function is as follows. Catalyzes the transfer of a phosphate group to glutamate to form L-glutamate 5-phosphate. The chain is Glutamate 5-kinase from Polaromonas naphthalenivorans (strain CJ2).